Here is a 289-residue protein sequence, read N- to C-terminus: ATP synthase subunit a (289 aa).

The next 6 membrane-spanning stretches (helical) occupy residues 43-63 (AFHL…LFIF), 103-123 (VIAP…AVDL), 160-180 (FCVF…GGFI), 193-213 (IFVQ…TLIA), 232-252 (VFIL…GLGV), and 259-279 (AVFH…LTIV).

This sequence belongs to the ATPase A chain family. As to quaternary structure, F-type ATPases have 2 components, CF(1) - the catalytic core - and CF(0) - the membrane proton channel. CF(1) has five subunits: alpha(3), beta(3), gamma(1), delta(1), epsilon(1). CF(0) has three main subunits: a(1), b(2) and c(9-12). The alpha and beta chains form an alternating ring which encloses part of the gamma chain. CF(1) is attached to CF(0) by a central stalk formed by the gamma and epsilon chains, while a peripheral stalk is formed by the delta and b chains.

It localises to the cell inner membrane. In terms of biological role, key component of the proton channel; it plays a direct role in the translocation of protons across the membrane. The chain is ATP synthase subunit a from Pseudomonas putida (strain GB-1).